A 131-amino-acid chain; its full sequence is Cystatin-like cysteine protease inhibitor EPIC3 (131 aa).

Positions 1 to 22 are cleaved as a signal peptide; it reads MAFTRSIALFAGLALAASSAQG. N-linked (GlcNAc...) asparagine glycosylation is present at N33. The Secondary area of contact motif lies at 71–75; that stretch reads QTVAG.

It belongs to the cystatin family.

Its subcellular location is the secreted. Its function is as follows. Secreted effector that interacts with and inhibits host apoplastic pathogenesis-related papain-like cysteine proteases. Inhibition of host proteases by a pathogen extracellular protease inhibitor forms a specific type of defense-counterdefense mechanism between plants and microbial pathogens. This is Cystatin-like cysteine protease inhibitor EPIC3 from Phytophthora infestans (strain T30-4) (Potato late blight agent).